The chain runs to 29 residues: Cytochrome b6-f complex subunit 8 (29 aa).

A helical membrane pass occupies residues I3–V23.

It belongs to the PetN family. As to quaternary structure, the 4 large subunits of the cytochrome b6-f complex are cytochrome b6, subunit IV (17 kDa polypeptide, PetD), cytochrome f and the Rieske protein, while the 4 small subunits are PetG, PetL, PetM and PetN. The complex functions as a dimer.

It localises to the plastid membrane. Its function is as follows. Component of the cytochrome b6-f complex, which mediates electron transfer between photosystem II (PSII) and photosystem I (PSI), cyclic electron flow around PSI, and state transitions. The sequence is that of Cytochrome b6-f complex subunit 8 from Cuscuta exaltata (Tall dodder).